A 945-amino-acid chain; its full sequence is Leucine--tRNA ligase (945 aa).

The short motif at 43 to 53 is the 'HIGH' region element; that stretch reads PYPNGAIHIGH. The 'KMSKS' region signature appears at 638-642; sequence KMSKS. ATP is bound at residue K641.

Belongs to the class-I aminoacyl-tRNA synthetase family.

Its subcellular location is the cytoplasm. It catalyses the reaction tRNA(Leu) + L-leucine + ATP = L-leucyl-tRNA(Leu) + AMP + diphosphate. This chain is Leucine--tRNA ligase, found in Pyrobaculum arsenaticum (strain DSM 13514 / JCM 11321 / PZ6).